The sequence spans 386 residues: Oxytocin receptor (386 aa).

A disordered region spans residues Met1–Pro31. Residues Met1–Leu38 are Extracellular-facing. Asn8, Asn15, and Asn26 each carry an N-linked (GlcNAc...) asparagine glycan. The chain crosses the membrane as a helical span at residues Ala39 to Ala63. The Cytoplasmic portion of the chain corresponds to Leu64–Leu74. The chain crosses the membrane as a helical span at residues Phe75–Leu97. The Extracellular portion of the chain corresponds to Leu98 to Arg113. Cys112 and Cys187 are oxidised to a cystine. The chain crosses the membrane as a helical span at residues Leu114–Leu135. The Cytoplasmic portion of the chain corresponds to Asp136–Arg154. A helical transmembrane segment spans residues Leu155–Phe175. The Extracellular portion of the chain corresponds to Ser176–Thr202. Residues Trp203–Phe225 form a helical membrane-spanning segment. The Cytoplasmic segment spans residues Lys226–Lys277. The helical transmembrane segment at Met278–Val296 threads the bilayer. The Extracellular portion of the chain corresponds to Gln297–Ser311. A helical transmembrane segment spans residues Ala312–Phe334. The Cytoplasmic portion of the chain corresponds to Thr335–Ser386. Residues Lys355–Leu375 show a composition bias toward polar residues. Residues Lys355–Ser386 are disordered. Residues Ser368 and Ser370 each carry the phosphoserine modification. The span at Ser376–Ser386 shows a compositional bias: low complexity.

This sequence belongs to the G-protein coupled receptor 1 family. Vasopressin/oxytocin receptor subfamily.

The protein resides in the cell membrane. In terms of biological role, receptor for oxytocin. The activity of this receptor is mediated by G proteins which activate a phosphatidylinositol-calcium second messenger system. This chain is Oxytocin receptor (OXTR), found in Sus scrofa (Pig).